The sequence spans 313 residues: Methionyl-tRNA formyltransferase (313 aa).

111-114 (SLLP) provides a ligand contact to (6S)-5,6,7,8-tetrahydrofolate.

It belongs to the Fmt family.

It catalyses the reaction L-methionyl-tRNA(fMet) + (6R)-10-formyltetrahydrofolate = N-formyl-L-methionyl-tRNA(fMet) + (6S)-5,6,7,8-tetrahydrofolate + H(+). In terms of biological role, attaches a formyl group to the free amino group of methionyl-tRNA(fMet). The formyl group appears to play a dual role in the initiator identity of N-formylmethionyl-tRNA by promoting its recognition by IF2 and preventing the misappropriation of this tRNA by the elongation apparatus. This is Methionyl-tRNA formyltransferase from Mesoplasma florum (strain ATCC 33453 / NBRC 100688 / NCTC 11704 / L1) (Acholeplasma florum).